We begin with the raw amino-acid sequence, 301 residues long: Haloalkane dehalogenase (301 aa).

Positions 47–284 (PPIVLLHGEP…INASHFIQED (238 aa)) constitute an AB hydrolase-1 domain. Asp123 (nucleophile) is an active-site residue. Catalysis depends on Asp250, which acts as the Proton donor. The active-site Proton acceptor is the His279.

The protein belongs to the haloalkane dehalogenase family. Type 1 subfamily. Monomer.

The catalysed reaction is 1-haloalkane + H2O = a halide anion + a primary alcohol + H(+). Catalyzes hydrolytic cleavage of carbon-halogen bonds in halogenated aliphatic compounds, leading to the formation of the corresponding primary alcohols, halide ions and protons. This chain is Haloalkane dehalogenase, found in Mycolicibacterium paratuberculosis (strain ATCC BAA-968 / K-10) (Mycobacterium paratuberculosis).